The chain runs to 428 residues: Kynureninase (428 aa).

Pyridoxal 5'-phosphate contacts are provided by residues threonine 104, threonine 105, 132–135, aspartate 213, histidine 216, and tyrosine 238; that span reads FPSD. Lysine 239 carries the post-translational modification N6-(pyridoxal phosphate)lysine. Tryptophan 267 and threonine 295 together coordinate pyridoxal 5'-phosphate.

This sequence belongs to the kynureninase family. In terms of assembly, homodimer. Requires pyridoxal 5'-phosphate as cofactor.

It carries out the reaction L-kynurenine + H2O = anthranilate + L-alanine + H(+). It catalyses the reaction 3-hydroxy-L-kynurenine + H2O = 3-hydroxyanthranilate + L-alanine + H(+). It participates in amino-acid degradation; L-kynurenine degradation; L-alanine and anthranilate from L-kynurenine: step 1/1. Its pathway is cofactor biosynthesis; NAD(+) biosynthesis; quinolinate from L-kynurenine: step 2/3. In terms of biological role, catalyzes the cleavage of L-kynurenine (L-Kyn) and L-3-hydroxykynurenine (L-3OHKyn) into anthranilic acid (AA) and 3-hydroxyanthranilic acid (3-OHAA), respectively. This chain is Kynureninase, found in Bacillus thuringiensis subsp. konkukian (strain 97-27).